The chain runs to 315 residues: tRNA dimethylallyltransferase (315 aa).

Position 13-20 (13-20) interacts with ATP; it reads GPTAVGKT. Position 15–20 (15–20) interacts with substrate; the sequence is TAVGKT. The tract at residues 38–41 is interaction with substrate tRNA; the sequence is DSRL.

Belongs to the IPP transferase family. Monomer. Requires Mg(2+) as cofactor.

It carries out the reaction adenosine(37) in tRNA + dimethylallyl diphosphate = N(6)-dimethylallyladenosine(37) in tRNA + diphosphate. In terms of biological role, catalyzes the transfer of a dimethylallyl group onto the adenine at position 37 in tRNAs that read codons beginning with uridine, leading to the formation of N6-(dimethylallyl)adenosine (i(6)A). The chain is tRNA dimethylallyltransferase from Herpetosiphon aurantiacus (strain ATCC 23779 / DSM 785 / 114-95).